A 313-amino-acid chain; its full sequence is Cytosolic Fe-S cluster assembly factor NUBP1 homolog (313 aa).

Residues 1-25 (MSDVPDDANAGCPGTGSAGAGKASG) are disordered. Positions 12, 26, 29, and 35 each coordinate [4Fe-4S] cluster. Position 66-73 (66-73 (GKGGVGKS)) interacts with ATP. C240 and C243 together coordinate [4Fe-4S] cluster.

Belongs to the Mrp/NBP35 ATP-binding proteins family. NUBP1/NBP35 subfamily. Heterotetramer of 2 NUBP1 and 2 NUBP2 chains. [4Fe-4S] cluster serves as cofactor. Expressed in head amphid and labial ciliated sensory neurons and tail phasmid ciliated chemosensory neurons.

Its subcellular location is the cytoplasm. It is found in the cell projection. Component of the cytosolic iron-sulfur (Fe/S) protein assembly (CIA) machinery. Required for maturation of extramitochondrial Fe-S proteins. The NUBP1-NUBP2 heterotetramer forms a Fe-S scaffold complex, mediating the de novo assembly of an Fe-S cluster and its transfer to target apoproteins. Regulates cilium formation and structure. The polypeptide is Cytosolic Fe-S cluster assembly factor NUBP1 homolog (Caenorhabditis elegans).